A 92-amino-acid chain; its full sequence is Acylphosphatase (92 aa).

One can recognise an Acylphosphatase-like domain in the interval 5 to 90 (TYRLVICGLV…GDFVGFQLRE (86 aa)). Catalysis depends on residues R20 and N38.

It belongs to the acylphosphatase family.

It catalyses the reaction an acyl phosphate + H2O = a carboxylate + phosphate + H(+). The chain is Acylphosphatase (acyP) from Albidiferax ferrireducens (strain ATCC BAA-621 / DSM 15236 / T118) (Rhodoferax ferrireducens).